The primary structure comprises 156 residues: MSRKNQAPKREVLPDPLYNSKIVTRLINRVMLDGKRGTAATIVYYAFSAIKEATGNDALEVFETAMDNIMPVLEVRARRVGGSNYQVPVEVRPERRTTLGLRWLVNASRARGEHTMKDRLAKEIMDAANNTGASVKKREDTHKMAEANRAFAHFRW.

It belongs to the universal ribosomal protein uS7 family. As to quaternary structure, part of the 30S ribosomal subunit. Contacts proteins S9 and S11.

Functionally, one of the primary rRNA binding proteins, it binds directly to 16S rRNA where it nucleates assembly of the head domain of the 30S subunit. Is located at the subunit interface close to the decoding center, probably blocks exit of the E-site tRNA. The chain is Small ribosomal subunit protein uS7 from Streptococcus pyogenes serotype M12 (strain MGAS2096).